The following is a 261-amino-acid chain: Cytochrome c oxidase subunit 3 (261 aa).

Residues 1-15 lie on the Mitochondrial matrix side of the membrane; the sequence is MAHQAHAYHMVDPSP. The chain crosses the membrane as a helical span at residues 16–34; that stretch reads WPLTGAIAALLMTSGLAIW. The Mitochondrial intermembrane segment spans residues 35-40; it reads FHFHST. Residues 41–66 form a helical membrane-spanning segment; it reads TLMTLGLILLLLTMYQWWRDIIREGT. Residues 67–72 are Mitochondrial matrix-facing; that stretch reads FQGHHT. The helical transmembrane segment at 73–105 threads the bilayer; sequence PPVQKGLRYGMILFITSEVFFFLGFFWAFYHSS. The Mitochondrial intermembrane portion of the chain corresponds to 106–128; sequence LAPTPELGGCWPPTGITPLDPFE. A helical membrane pass occupies residues 129-152; that stretch reads VPLLNTAVLLASGVTVTWAHHSIM. At 153 to 155 the chain is on the mitochondrial matrix side; the sequence is EGE. A helical transmembrane segment spans residues 156–183; the sequence is RKQAIQSLALTILLGFYFTALQAMEYYE. At 184-190 the chain is on the mitochondrial intermembrane side; that stretch reads APFTIAD. Residues 191-223 form a helical membrane-spanning segment; it reads GVYGSTFFVATGFHGLHVIIGSTFLAVCLLRQI. Residues 224–232 are Mitochondrial matrix-facing; sequence QYHFTSEHH. A helical membrane pass occupies residues 233-256; sequence FGFEAAAWYWHFVDVVWLFLYVSI. Topologically, residues 257–261 are mitochondrial intermembrane; that stretch reads YWWGS.

This sequence belongs to the cytochrome c oxidase subunit 3 family. Component of the cytochrome c oxidase (complex IV, CIV), a multisubunit enzyme composed of 14 subunits. The complex is composed of a catalytic core of 3 subunits MT-CO1, MT-CO2 and MT-CO3, encoded in the mitochondrial DNA, and 11 supernumerary subunits COX4I, COX5A, COX5B, COX6A, COX6B, COX6C, COX7A, COX7B, COX7C, COX8 and NDUFA4, which are encoded in the nuclear genome. The complex exists as a monomer or a dimer and forms supercomplexes (SCs) in the inner mitochondrial membrane with NADH-ubiquinone oxidoreductase (complex I, CI) and ubiquinol-cytochrome c oxidoreductase (cytochrome b-c1 complex, complex III, CIII), resulting in different assemblies (supercomplex SCI(1)III(2)IV(1) and megacomplex MCI(2)III(2)IV(2)).

Its subcellular location is the mitochondrion inner membrane. The enzyme catalyses 4 Fe(II)-[cytochrome c] + O2 + 8 H(+)(in) = 4 Fe(III)-[cytochrome c] + 2 H2O + 4 H(+)(out). Functionally, component of the cytochrome c oxidase, the last enzyme in the mitochondrial electron transport chain which drives oxidative phosphorylation. The respiratory chain contains 3 multisubunit complexes succinate dehydrogenase (complex II, CII), ubiquinol-cytochrome c oxidoreductase (cytochrome b-c1 complex, complex III, CIII) and cytochrome c oxidase (complex IV, CIV), that cooperate to transfer electrons derived from NADH and succinate to molecular oxygen, creating an electrochemical gradient over the inner membrane that drives transmembrane transport and the ATP synthase. Cytochrome c oxidase is the component of the respiratory chain that catalyzes the reduction of oxygen to water. Electrons originating from reduced cytochrome c in the intermembrane space (IMS) are transferred via the dinuclear copper A center (CU(A)) of subunit 2 and heme A of subunit 1 to the active site in subunit 1, a binuclear center (BNC) formed by heme A3 and copper B (CU(B)). The BNC reduces molecular oxygen to 2 water molecules using 4 electrons from cytochrome c in the IMS and 4 protons from the mitochondrial matrix. The chain is Cytochrome c oxidase subunit 3 (mt-co3) from Carassius auratus (Goldfish).